The following is a 164-amino-acid chain: LWamide neuropeptides (164 aa).

Positions 1–6 are excised as a propeptide; sequence RSADAQ. A disordered region spans residues 1–92; it reads RSADAQQHGL…WGRSADAQQP (92 aa). Trp-11 and Trp-20 each carry tryptophan amide. A propeptide spanning residues 23 to 27 is cleaved from the precursor; sequence SADAQ. Tryptophan amide occurs at positions 32 and 41. Positions 44 to 49 are excised as a propeptide; it reads SAEPGQ. 2 positions are modified to tryptophan amide: Trp-53 and Trp-62. The propeptide occupies 65 to 70; sequence SAEPLQ. 2 positions are modified to tryptophan amide: Trp-74 and Trp-83. Residues 86-90 constitute a propeptide that is removed on maturation; sequence SADAQ. Trp-95, Trp-106, and Trp-115 each carry tryptophan amide. Residues 118–123 constitute a propeptide that is removed on maturation; that stretch reads SADPGQ. Tryptophan amide is present on residues Trp-127 and Trp-137. A propeptide spanning residues 140–164 is cleaved from the precursor; it reads SYEPPQFEDLEDLKKKSAIPKPSEQ.

Belongs to the LWamide neuropeptide family.

It localises to the secreted. In terms of biological role, metamorphosin A may be part of an internal signaling system involved in control of metamorphosis. In Actinia equina (Beadlet anemone), this protein is LWamide neuropeptides.